Here is a 248-residue protein sequence, read N- to C-terminus: tRNA (guanine-N(1)-)-methyltransferase (248 aa).

S-adenosyl-L-methionine is bound by residues G116 and V136 to L141.

Belongs to the RNA methyltransferase TrmD family. As to quaternary structure, homodimer.

It is found in the cytoplasm. The catalysed reaction is guanosine(37) in tRNA + S-adenosyl-L-methionine = N(1)-methylguanosine(37) in tRNA + S-adenosyl-L-homocysteine + H(+). Functionally, specifically methylates guanosine-37 in various tRNAs. This Psychromonas ingrahamii (strain DSM 17664 / CCUG 51855 / 37) protein is tRNA (guanine-N(1)-)-methyltransferase.